Consider the following 311-residue polypeptide: Dermonecrotic toxin (311 aa).

The N-terminal stretch at 1–21 (MYVHLALILGCWTVVLQGAET) is a signal peptide. Positions 22-26 (DVGER) are excised as a propeptide. Residue His-38 is part of the active site. 2 residues coordinate Mg(2+): Glu-58 and Asp-60. His-73 serves as the catalytic Nucleophile. Cys-77 and Cys-83 form a disulfide bridge. Position 117 (Asp-117) interacts with Mg(2+).

It belongs to the arthropod phospholipase D family. Class I subfamily. Requires Mg(2+) as cofactor. Expressed by the venom gland.

The protein localises to the secreted. The catalysed reaction is an N-(acyl)-sphingosylphosphocholine = an N-(acyl)-sphingosyl-1,3-cyclic phosphate + choline. It carries out the reaction an N-(acyl)-sphingosylphosphoethanolamine = an N-(acyl)-sphingosyl-1,3-cyclic phosphate + ethanolamine. The enzyme catalyses a 1-acyl-sn-glycero-3-phosphocholine = a 1-acyl-sn-glycero-2,3-cyclic phosphate + choline. It catalyses the reaction a 1-acyl-sn-glycero-3-phosphoethanolamine = a 1-acyl-sn-glycero-2,3-cyclic phosphate + ethanolamine. With respect to regulation, catalytic activity and hemolysis are inhibited by divalent ion chelators (1,10-phenanthroline, EDTA, and EGTA). Functionally, dermonecrotic toxins cleave the phosphodiester linkage between the phosphate and headgroup of certain phospholipids (sphingolipid and lysolipid substrates), forming an alcohol (often choline) and a cyclic phosphate. This toxin acts on sphingomyelin (SM). It may also act on ceramide phosphoethanolamine (CPE), lysophosphatidylcholine (LPC) and lysophosphatidylethanolamine (LPE), but not on lysophosphatidylserine (LPS), and lysophosphatidylglycerol (LPG). It acts by transphosphatidylation, releasing exclusively cyclic phosphate products as second products. Shows complement-dependent hemolysis. Also induces dermonecrosis, vascular permeability, edema, inflammatory response, and platelet aggregation. In Loxosceles laeta (South American recluse spider), this protein is Dermonecrotic toxin.